The sequence spans 1261 residues: MPNGKQQHEVTESSSPPEIPHITANMIPLSNIIKYYTQEAYKQLTTAIENLSMNVNEESDIKRKKYFLNVIINLRQDFIKVYTLIKWASISKDVSKFIDLLNWFRIQEFHFENLIFQLNALTGYNAAKLPNSDIITALEVLYHGRPKLPSYNYIKSDNLSPQKILETLNDLNLVLMTRFALMDNIPKRFDYEIKDGRAYIRVSNEFEVSITVGNDLIIDNPEEYYKSPFYFIDFKFLFGANPESGLITFNDDKISTKLPTSSHKKLEKLVNQTLLTRGLQGLYELLHKYSNSFKIYLLAKQFQTLLINSRWRGNFQINYQTNKSLIVINYWSQHYLSRNWKSFIELGIDSHSNLNYRWFKNGQYCFGDQGNNELDKIFHLQRRNSNNGVTTSSNTISTSAMIAGIRRSTELSNETAIVDDNDNDNDDTNNTGETENEDLNVDLILNVVVNQHAKSIMSEIYSQLLTRFSETDVSMVSPHQLLLQISPKKSTVFAINPLTGFFYFIDPTPIQTYITKKINSPPPTLSQVSIKQSFIPESDMISYVIDQIIQLRLEVFNKEVNTKLATTAWINNGIIKLSDHELSKLTQFLIQNEEQEGDDNEEDSSTNTRLDSVLQSFKVQFYRRKNWPSSWFLINMISGVTTKSFWWVARIKSISGDWKIQWAQIIKFHGDNAKQELSPNESKVFDKPKRTVDCSIESEQLNFEFFKTLSTLSSNLILDHMILEELQVRSIKFIKLDWETIDDNKIFSKFKQNHDISLKRKNSHNINIDVNVDVADNTSTTTNTKYIRAPKLKYESMFLIYNDKLLPIYNSATILFLKIELVESNKMYLKLFGNLRNLQIKNTSEDIQKLHLNIDEANQYFEIDNTVDLSTVINEPKTLLLNLIFNTLNKLNSLIKILDQLNKSNVTVLDNSMDNITINIKDKYNDNNDKLIIIKLPEQATDSIQLLMKNGSTTTTDEIDLRNNNILEFELILKFLNQYLRESKSNNHNRQQISIIKIIQYLTEINPILQSTKAINQQLAELKRINSTNNNNNNAKRRSILKLSNGLYKLYFNLNIISLTHLQLVFFMNSNTGSNLKKIQRDKIMINLSLIKFDRFSKPNGNFQDSTNGHLIKISFKDSLINENLKFKNLFEIIFKNINELLITKSKQIKSLNQTENQQQQQPLKQEDNSDSAIIKKESQSIEDDLLDFGEYDNDIKPQQQEPQQNEKENSKTTSKENETVRPDDILIKLNYDYLLSMNNLQLMINEITKSCFQYLQQQQE.

A compositionally biased stretch (basic and acidic residues) spans 1–11 (MPNGKQQHEVT). Disordered regions lie at residues 1–21 (MPNG…EIPH), 413–435 (NETA…GETE), and 1193–1220 (DNDI…ENET). Over residues 417–427 (IVDDNDNDNDD) the composition is skewed to acidic residues. Positions 1205 to 1220 (QNEKENSKTTSKENET) are enriched in basic and acidic residues.

Belongs to the Mediator complex subunit 14 family. As to quaternary structure, component of the Mediator complex.

The protein localises to the nucleus. Component of the Mediator complex, a coactivator involved in the regulated transcription of nearly all RNA polymerase II-dependent genes. Mediator functions as a bridge to convey information from gene-specific regulatory proteins to the basal RNA polymerase II transcription machinery. Mediator is recruited to promoters by direct interactions with regulatory proteins and serves as a scaffold for the assembly of a functional preinitiation complex with RNA polymerase II and the general transcription factors. The protein is Mediator of RNA polymerase II transcription subunit 14 (MED14) of Candida albicans (strain SC5314 / ATCC MYA-2876) (Yeast).